Here is a 123-residue protein sequence, read N- to C-terminus: uncharacterized protein (123 aa).

The segment at 76-97 is disordered; that stretch reads ENNKRKKKSEGERVRSPRTFRG.

This is an uncharacterized protein from Saccharomyces cerevisiae (strain ATCC 204508 / S288c) (Baker's yeast).